We begin with the raw amino-acid sequence, 538 residues long: MPKLLKFNEEARRALERGVDKVANAVKITLGPKGRNVVIEKSWGSPTITNDGVSIAKEIELEDKFENLGAQLVKEVASKTNDVAGDGTTTATVLAQAMIKEGLKNVAAGANPILLKRGIDKAVERAVEEIKKLSKKLSGREDIAHVAAISANSPEIGELIAEAMDKVGEDGVITVEDSKTLETYVEFTEGMQFDRGYISPYFVTDAEKMEVVLKEPSILITDRKLSAVKPLIPILEKVAQTGKPLLVIAEDVEGEALTTLVLNKLKGTLQSCAVKAPGFGERRKAMLQDIAILTGGQVASEELGINLEDLTLEDLGRADLVRVKKDETIIIGGKGDPEAIKKRIAQIKAQIEETTSEYEKETLQERMAKLAGGVAVIKVGAATETELKEKKHRIEDALSATRAAVEEGIVPGGGVTLLRSRKAVEKLLEELDGDEKIGAQIVYKALSAPIRQIAENAGYDGAVIIEKILASDDPAYGFDALRGEFGNMFEKGIIDPAKVTRSALQNAASIAGMLLTTEVLVVEKPEEKKETPSLPEEY.

ATP-binding positions include 29–32, 86–90, glycine 413, 479–481, and aspartate 495; these read TLGP, DGTTT, and DAL.

This sequence belongs to the chaperonin (HSP60) family. Forms a cylinder of 14 subunits composed of two heptameric rings stacked back-to-back. Interacts with the co-chaperonin GroES.

It localises to the cytoplasm. The catalysed reaction is ATP + H2O + a folded polypeptide = ADP + phosphate + an unfolded polypeptide.. In terms of biological role, together with its co-chaperonin GroES, plays an essential role in assisting protein folding. The GroEL-GroES system forms a nano-cage that allows encapsulation of the non-native substrate proteins and provides a physical environment optimized to promote and accelerate protein folding. The protein is Chaperonin GroEL of Thermotoga neapolitana.